The chain runs to 459 residues: uncharacterized protein (459 aa).

Lys285 bears the N6-(pyridoxal phosphate)lysine mark.

The protein belongs to the class-III pyridoxal-phosphate-dependent aminotransferase family.

The protein localises to the cytoplasm. This is an uncharacterized protein from Schizosaccharomyces pombe (strain 972 / ATCC 24843) (Fission yeast).